The chain runs to 88 residues: MSDARNNRKVYRGRVVSDKMDKTITVVVETTKTDARYGKRVKYSKKYKAHDENGEAHTGDIVEIMETRPLSATKRFRLVDIVEKAVII.

This sequence belongs to the universal ribosomal protein uS17 family. As to quaternary structure, part of the 30S ribosomal subunit.

Its function is as follows. One of the primary rRNA binding proteins, it binds specifically to the 5'-end of 16S ribosomal RNA. The chain is Small ribosomal subunit protein uS17 from Levilactobacillus brevis (strain ATCC 367 / BCRC 12310 / CIP 105137 / JCM 1170 / LMG 11437 / NCIMB 947 / NCTC 947) (Lactobacillus brevis).